The chain runs to 352 residues: Nicotinate-nucleotide--dimethylbenzimidazole phosphoribosyltransferase (352 aa).

Glu318 functions as the Proton acceptor in the catalytic mechanism.

The protein belongs to the CobT family.

It catalyses the reaction 5,6-dimethylbenzimidazole + nicotinate beta-D-ribonucleotide = alpha-ribazole 5'-phosphate + nicotinate + H(+). It participates in nucleoside biosynthesis; alpha-ribazole biosynthesis; alpha-ribazole from 5,6-dimethylbenzimidazole: step 1/2. Catalyzes the synthesis of alpha-ribazole-5'-phosphate from nicotinate mononucleotide (NAMN) and 5,6-dimethylbenzimidazole (DMB). The polypeptide is Nicotinate-nucleotide--dimethylbenzimidazole phosphoribosyltransferase (Dehalococcoides mccartyi (strain ATCC BAA-2100 / JCM 16839 / KCTC 5957 / BAV1)).